A 124-amino-acid chain; its full sequence is Small ribosomal subunit protein uS12 (124 aa).

The disordered stretch occupies residues 1-23 (MATINQLVRKPRKRPVAKSDVPA). Residue Asp89 is modified to 3-methylthioaspartic acid. A disordered region spans residues 101-124 (ALDTSGVQNRRQGRSKYGTKRPKS). The segment covering 111 to 124 (RQGRSKYGTKRPKS) has biased composition (basic residues).

Belongs to the universal ribosomal protein uS12 family. In terms of assembly, part of the 30S ribosomal subunit. Contacts proteins S8 and S17. May interact with IF1 in the 30S initiation complex.

With S4 and S5 plays an important role in translational accuracy. Its function is as follows. Interacts with and stabilizes bases of the 16S rRNA that are involved in tRNA selection in the A site and with the mRNA backbone. Located at the interface of the 30S and 50S subunits, it traverses the body of the 30S subunit contacting proteins on the other side and probably holding the rRNA structure together. The combined cluster of proteins S8, S12 and S17 appears to hold together the shoulder and platform of the 30S subunit. The sequence is that of Small ribosomal subunit protein uS12 from Chromohalobacter salexigens (strain ATCC BAA-138 / DSM 3043 / CIP 106854 / NCIMB 13768 / 1H11).